We begin with the raw amino-acid sequence, 329 residues long: Phenylalanine--tRNA ligase alpha subunit (329 aa).

Belongs to the class-II aminoacyl-tRNA synthetase family. Phe-tRNA synthetase alpha subunit type 1 subfamily. Tetramer of two alpha and two beta subunits. Mg(2+) serves as cofactor.

It localises to the cytoplasm. It catalyses the reaction tRNA(Phe) + L-phenylalanine + ATP = L-phenylalanyl-tRNA(Phe) + AMP + diphosphate + H(+). This chain is Phenylalanine--tRNA ligase alpha subunit (pheS), found in Buchnera aphidicola subsp. Acyrthosiphon pisum (strain APS) (Acyrthosiphon pisum symbiotic bacterium).